Reading from the N-terminus, the 291-residue chain is Lactoylglutathione lyase (291 aa).

VOC domains lie at 24–149 and 155–283; these read RLLH…LIQR and PLCQ…LVDN. Residues arginine 31, asparagine 82, and histidine 96 each contribute to the substrate site. The active site involves histidine 96. The active-site Proton donor/acceptor is glutamate 145. Residue glutamate 145 coordinates Ni(2+). Active-site residues include glutamine 158 and glutamate 209. Glutamate 209 contacts Ni(2+).

This sequence belongs to the glyoxalase I family. In terms of assembly, monomer. The cofactor is Ni(2+). In terms of processing, phosphorylated after gibberellin treatment. Expressed in callus, stem, leaves, panicles and maturing seeds (at protein level).

The catalysed reaction is (R)-S-lactoylglutathione = methylglyoxal + glutathione. It participates in secondary metabolite metabolism; methylglyoxal degradation; (R)-lactate from methylglyoxal: step 1/2. Catalyzes the conversion of hemimercaptal, formed from methylglyoxal and glutathione, to S-lactoylglutathione. Involved in the detoxifiation of methylglyoxal. Can functionally complement growth defect of a yeast mutant lacking GLY I. Involved in abiotic stress response. Over-expression of GLYI-11 in tobacco increases tolerance to osmotic, oxidative and salt stresses. This is Lactoylglutathione lyase from Oryza sativa subsp. japonica (Rice).